We begin with the raw amino-acid sequence, 94 residues long: Viral macrophage inflammatory protein 2 (94 aa).

The N-terminal stretch at 1–20 is a signal peptide; the sequence is MDTKGILLVAVLTALLCLQS. 2 disulfides stabilise this stretch: Cys-34–Cys-58 and Cys-35–Cys-74.

It belongs to the intercrine beta (chemokine CC) family. Monomer. Interacts with human chemokine receptor CXCR4.

It localises to the secreted. Functionally, blocks infection by several different human immunodeficiency virus type 1 (HIV-1) strains. This occurs because vMIP-II binds to a wide range of chemokine receptors. May form part of the response to host defenses contributing to virus-induced neoplasia and may have relevance to KSHV and HIV-I interactions. The polypeptide is Viral macrophage inflammatory protein 2 (ORF K4) (Human herpesvirus 8 type P (isolate GK18) (HHV-8)).